Reading from the N-terminus, the 435-residue chain is Elongation factor 1-alpha (435 aa).

The tr-type G domain maps to 4–229 (KPHLNLIVIG…DQLEIPPKPV (226 aa)). Residues 13-20 (GHVDHGKS) are G1. 13-20 (GHVDHGKS) is a binding site for GTP. Ser20 contributes to the Mg(2+) binding site. A G2 region spans residues 69–73 (GVTIN). A G3 region spans residues 90–93 (DAPG). GTP contacts are provided by residues 90 to 94 (DAPGH) and 152 to 155 (NKMD). The G4 stretch occupies residues 152-155 (NKMD). Positions 193 to 195 (VAP) are G5.

Belongs to the TRAFAC class translation factor GTPase superfamily. Classic translation factor GTPase family. EF-Tu/EF-1A subfamily.

It localises to the cytoplasm. It catalyses the reaction GTP + H2O = GDP + phosphate + H(+). In terms of biological role, GTP hydrolase that promotes the GTP-dependent binding of aminoacyl-tRNA to the A-site of ribosomes during protein biosynthesis. The chain is Elongation factor 1-alpha from Sulfolobus acidocaldarius (strain ATCC 33909 / DSM 639 / JCM 8929 / NBRC 15157 / NCIMB 11770).